A 2753-amino-acid chain; its full sequence is Maltase-glucoamylase (2753 aa).

The Cytoplasmic segment spans residues 1-13 (MARKKLKKFTTLE). The helical; Signal-anchor for type II membrane protein transmembrane segment at 14–34 (IVLSVLLLVLFIISIVLIVLL) threads the bilayer. At 35–2753 (AKESLKSTAP…FTSLTWISTL (2719 aa)) the chain is on the lumenal side. Positions 41–87 (STAPDPGTTGTPDPGTTGTPDPGTTGTTHARTTGPPDPGTTGTTPVS) are disordered. The segment covering 44–85 (PDPGTTGTPDPGTTGTPDPGTTGTTHARTTGPPDPGTTGTTP) has biased composition (low complexity). Residues 88–134 (AECPVVNELERINCIPDQPPTKATCDQRGCCWNPQGAVSVPWCYYSK) form the P-type 1 domain. Intrachain disulfides connect Cys-90–Cys-118, Cys-101–Cys-117, and Cys-112–Cys-130. N-linked (GlcNAc...) asparagine glycosylation occurs at Asn-135. Asp-289 is a binding site for acarbose. Residue Asn-295 is glycosylated (N-linked (GlcNAc...) asparagine). The tract at residues 356–737 (PEQVVQEYLE…FRAHSRGDTV (382 aa)) is maltase. Asp-413 serves as a coordination point for acarbose. A sulfotyrosine mark is found at Tyr-416 and Tyr-425. N-linked (GlcNAc...) asparagine glycans are attached at residues Asn-457, Asn-458, and Asn-479. The active-site Nucleophile is the Asp-529. The active site involves Glu-532. The acarbose site is built by Arg-612 and Asp-628. Cys-659 and Cys-670 are oxidised to a cystine. His-686 provides a ligand contact to acarbose. Asn-707, Asn-749, Asn-827, Asn-885, Asn-912, Asn-977, Asn-989, and Asn-1255 each carry an N-linked (GlcNAc...) asparagine glycan. One can recognise a P-type 2 domain in the interval 954–1000 (WSIKIRDEEKIDCYPDENGASAENCTARGCIWEASNSSGVPFCYFVN). Cystine bridges form between Cys-966/Cys-983 and Cys-978/Cys-996. Residues 1221–1632 (TPELVTQQYT…MQKAHTEGVT (412 aa)) are glucoamylase. Tyr-1282 carries the post-translational modification Sulfotyrosine. N-linked (GlcNAc...) asparagine glycosylation is found at Asn-1323, Asn-1364, and Asn-1388. Asp-1420 functions as the Nucleophile in the catalytic mechanism. The active site involves Glu-1423. Asp-1526 functions as the Proton donor in the catalytic mechanism. A P-type 3 domain is found at 1850–1896 (WSIKIRDEEKIDCYPDENGDSAENCTARGCIWEASNSSGVPFCYFVN). 2 cysteine pairs are disulfide-bonded: Cys-1862–Cys-1879 and Cys-1874–Cys-1892. Asn-2499, Asn-2568, Asn-2738, and Asn-2743 each carry an N-linked (GlcNAc...) asparagine glycan.

This sequence belongs to the glycosyl hydrolase 31 family. Monomer. In terms of processing, N- and O-glycosylated. Post-translationally, does not undergo intracellular or extracellular proteolytic cleavage. Sulfated. As to expression, broadly expressed. Highly expressed in small intestine. Expressed in granulocytes.

It localises to the apical cell membrane. It catalyses the reaction Hydrolysis of terminal, non-reducing (1-&gt;4)-linked alpha-D-glucose residues with release of alpha-D-glucose.. The catalysed reaction is D-maltoheptaose + H2O = D-maltohexaose + alpha-D-glucose. The enzyme catalyses D-maltohexaose + H2O = D-maltopentaose + alpha-D-glucose. It carries out the reaction D-maltopentaose + H2O = D-maltotetraose + alpha-D-glucose. It catalyses the reaction D-maltotetraose + H2O = D-maltotriose + alpha-D-glucose. The catalysed reaction is D-maltotriose + H2O = D-maltose + alpha-D-glucose. The enzyme catalyses D-maltose + H2O = alpha-D-glucose + D-glucose. It carries out the reaction nigerose + H2O = alpha-D-glucose + D-glucose. It catalyses the reaction kojibiose + H2O = alpha-D-glucose + D-glucose. The catalysed reaction is isomaltose + H2O = alpha-D-glucose + D-glucose. The enzyme catalyses 6-O-alpha-D-glucopyranosyl-D-fructose + H2O = alpha-D-glucose + D-fructose. It functions in the pathway carbohydrate degradation. Its activity is regulated as follows. Down-regulated at high oligomaltose concentration as it occurs during the mealtime. Down-regulated by anti-diabetic drug acarbose. Functionally, alpha-(1,4) exo-glucosidase involved in breakdown of dietary starch oligosaccharides in small intestine. Cleaves the non-reducing alpha-(1,4)-linked glucose residue in linear dextrins with retention of anomeric center stereochemistry. Mainly hydrolyzes short length oligomaltoses having two to seven glucose residues. Can cleave alpha-(1,2), alpha-(1,3) and alpha-(1,6) glycosidic linkages with lower efficiency, whereas beta glycosidic linkages are usually not hydrolyzed. The chain is Maltase-glucoamylase from Homo sapiens (Human).